The chain runs to 206 residues: Histidine biosynthesis bifunctional protein HisIE (206 aa).

Residues 1-117 (MCNEPATSDV…SCFPAAPGQF (117 aa)) form a phosphoribosyl-AMP cyclohydrolase region. The phosphoribosyl-ATP pyrophosphohydrolase stretch occupies residues 118–206 (LGALDALVAE…AVTVLEARHR (89 aa)).

In the N-terminal section; belongs to the PRA-CH family. This sequence in the C-terminal section; belongs to the PRA-PH family.

Its subcellular location is the cytoplasm. The catalysed reaction is 1-(5-phospho-beta-D-ribosyl)-ATP + H2O = 1-(5-phospho-beta-D-ribosyl)-5'-AMP + diphosphate + H(+). It carries out the reaction 1-(5-phospho-beta-D-ribosyl)-5'-AMP + H2O = 1-(5-phospho-beta-D-ribosyl)-5-[(5-phospho-beta-D-ribosylamino)methylideneamino]imidazole-4-carboxamide. It participates in amino-acid biosynthesis; L-histidine biosynthesis; L-histidine from 5-phospho-alpha-D-ribose 1-diphosphate: step 2/9. The protein operates within amino-acid biosynthesis; L-histidine biosynthesis; L-histidine from 5-phospho-alpha-D-ribose 1-diphosphate: step 3/9. In Xylella fastidiosa (strain 9a5c), this protein is Histidine biosynthesis bifunctional protein HisIE (hisI).